The chain runs to 311 residues: MSNSIVIQTNSTVIEDMKQQYKHSLSPKTPQGGIFMAKVPSCTITAYKSGKVMFQGGRAEAEAARWQTVSQTPKTAVKKSVDSHRYAPPASIGTMSIVGSDEVGTGDFFGPMTVVAVYVDAKQIPLLKELGVKDSKNLNDEQITAIAKQLLHVVPYSSLVLHNEKYNELFDKGNNQGKLKALLHNKAITNLLTKIAPTKPEGVLIDQFTQPDTYYKYLAKQKQVQRENVYFATKGESVHLAVAAASILARYSFVKQFNELSKKAGMPLPKGAGKQVDIAAAKLIQKLGKERLPEFVKLHFANTEKAFRLLK.

One can recognise an RNase H type-2 domain in the interval Met-95–Lys-311. Asp-101, Glu-102, and Asp-206 together coordinate a divalent metal cation.

Belongs to the RNase HII family. RnhC subfamily. It depends on Mn(2+) as a cofactor. Mg(2+) serves as cofactor.

It is found in the cytoplasm. The catalysed reaction is Endonucleolytic cleavage to 5'-phosphomonoester.. Endonuclease that specifically degrades the RNA of RNA-DNA hybrids. In Bacillus thuringiensis subsp. konkukian (strain 97-27), this protein is Ribonuclease HIII.